The chain runs to 94 residues: Small ribosomal subunit protein uS19 (94 aa).

Belongs to the universal ribosomal protein uS19 family.

Protein S19 forms a complex with S13 that binds strongly to the 16S ribosomal RNA. This chain is Small ribosomal subunit protein uS19, found in Caldicellulosiruptor saccharolyticus (strain ATCC 43494 / DSM 8903 / Tp8T 6331).